We begin with the raw amino-acid sequence, 35 residues long: UPF0387 membrane protein YohO (35 aa).

The helical transmembrane segment at 6–26 (IGVIALFLLMAIGGIGGVMLA) threads the bilayer.

Belongs to the UPF0387 family.

Its subcellular location is the cell inner membrane. The protein is UPF0387 membrane protein YohO of Salmonella paratyphi A (strain ATCC 9150 / SARB42).